The sequence spans 783 residues: Metabotropic glutamate receptor-like protein J (783 aa).

The first 20 residues, 1-20 (MKILLYIAIILSFFSLITIS), serve as a signal peptide directing secretion. At 21 to 383 (SECKIAVLLS…DYPNSLKYGV (363 aa)) the chain is on the extracellular side. A coiled-coil region spans residues 56–85 (DFSIYYENLEESMEEAEKAFQDALHKGANL). N-linked (GlcNAc...) asparagine glycans are attached at residues N181, N196, N256, N282, and N315. The helical transmembrane segment at 384 to 404 (TIVSGVCIFICLVCMTLVVVF) threads the bilayer. At 405–415 (KKARVIKSSSP) the chain is on the cytoplasmic side. The chain crosses the membrane as a helical span at residues 416–436 (AFLLLILLGCCIIFAACILFA). Over 437 to 443 (QSPTNQT) the chain is Extracellular. N441 carries N-linked (GlcNAc...) asparagine glycosylation. The helical transmembrane segment at 444–464 (CSARIWLLSLGYTLFLGNLLV) threads the bilayer. Residues 465 to 489 (KNWRIWLLFDNPKLKKRAITNWKLY) are Cytoplasmic-facing. Residues 490–510 (PWVFAILAIDVMILAIWQGLG) form a helical membrane-spanning segment. Residues 511–538 (NINAESRIGYDSLTQYQYKNVCSSDDQG) lie on the Extracellular side of the membrane. Residues 539–559 (SIALYLLLVFHGLVLLVACFI) form a helical membrane-spanning segment. The Cytoplasmic segment spans residues 560-575 (SFKIKVVDIEEFNESK). Residues 576–596 (PITTSVYIITFCLFIVIPLMV) traverse the membrane as a helical segment. At 597-604 (SPQSLTSQ) the chain is on the extracellular side. The helical transmembrane segment at 605–625 (TTIICVCAIVTTLISMLLLFG) threads the bilayer. At 626 to 783 (SKFYKMATQG…GETEIDSNNV (158 aa)) the chain is on the cytoplasmic side. Low complexity predominate over residues 647–656 (KSSSKSSKSS). Disordered regions lie at residues 647–696 (KSSS…FSNK) and 731–783 (QLQQ…SNNV). A compositionally biased stretch (acidic residues) spans 670–679 (GEDDTSDETS). The span at 763 to 783 (VLSKRISNQQNGETEIDSNNV) shows a compositional bias: polar residues.

This sequence in the N-terminal section; belongs to the BMP lipoprotein family. The protein in the C-terminal section; belongs to the G-protein coupled receptor 3 family. GABA-B receptor subfamily.

The protein resides in the cell membrane. The protein localises to the membrane. Its subcellular location is the endoplasmic reticulum membrane. It localises to the golgi apparatus membrane. It is found in the nucleus envelope. May act during the development and be a negative regulator. This chain is Metabotropic glutamate receptor-like protein J (grlJ), found in Dictyostelium discoideum (Social amoeba).